Here is a 123-residue protein sequence, read N- to C-terminus: uncharacterized protein (123 aa).

The signal sequence occupies residues 1–25; sequence MKHGIKALLITLSLACAGMSHSALA. Low complexity predominate over residues 40 to 53; the sequence is EAPAAQSKAAVPAK. The interval 40–62 is disordered; it reads EAPAAQSKAAVPAKASDEEGTRV. HhH domains are found at residues 60-90 and 91-120; these read TRVSINNASAEELARAMNGVGLKKAQAIVSY and REEYGPFKTVEDLKQVPGMGNSLVERNLAV.

This is an uncharacterized protein from Escherichia coli (strain K12).